A 151-amino-acid chain; its full sequence is Large ribosomal subunit protein bL9 (151 aa).

This sequence belongs to the bacterial ribosomal protein bL9 family.

Its function is as follows. Binds to the 23S rRNA. The sequence is that of Large ribosomal subunit protein bL9 from Francisella philomiragia subsp. philomiragia (strain ATCC 25017 / CCUG 19701 / FSC 153 / O#319-036).